Reading from the N-terminus, the 453-residue chain is MSADTMRAPTYNVAHLLSAVQSEMTRGSEKGDPSEKGLKVTLEDRDLWRRFSKLTNEMIVTKTGRRMFPVLSASVTGLNPNAMYSILLDFTPADEHRWKYVNGEWVPGGKPDSPPPSTAYIHPDSPNFGAHWMKQCVSFSKVKLSNKLNGTGQIMLNSLHKYEPRIHVIRVGGPEKQRLIRSFSFPETQFIAVTAYQNEDITQLKIKYNPFAKAFLDIKEKGEHEFEDCHDHQQPRYPQLGSWFLPSAGTLCPPSPHHQFPPSLGMPSPVSHSCAVERYGSLRSHRSTPYPPPPYEQKYSPTSAYATDSTASSLSLLPAHEAWSPLGSSTHHTSNITTSPSHQYGGVWPPVTSSAVQPASSCGVGSPVHTSLLRAAYSNYSQPSTSSITGVPRPPAGSMSSSCAGYQNYNSPSEIHGGLNSTDAIGSYPTVGNQLCPGKVGAWSPLTPPSPGV.

Positions 47–217 form a DNA-binding region, T-box; that stretch reads LWRRFSKLTN…YNPFAKAFLD (171 aa). The segment at 283–304 is disordered; it reads RSHRSTPYPPPPYEQKYSPTSA.

It localises to the nucleus. In terms of biological role, may be involved in the transcriptional regulation of genes required for gastrulation. The chain is T-box transcription factor T homolog from Patiria pectinifera (Starfish).